Here is a 575-residue protein sequence, read N- to C-terminus: Intermediate filament protein ifd-1 (575 aa).

The segment at 1–56 (MSKLNPRVAHNPVLSRIIESGRTNLPSGITSAGSLSAYAQAAAVTIRDNRDREKRE) is head. In terms of domain architecture, IF rod spans 53-406 (EKREIADLNN…KLMEQAENLR (354 aa)). Residues 57-88 (IADLNNRLARYVEKVRFLEAQNRVLENDIGLF) form a coil 1A region. The segment at 89–102 (RQAAHIHTGKVRDY) is linker 1. The tract at residues 103–240 (YDAEKTSLAT…STHEIAIREE (138 aa)) is coil 1B. The linker 12 stretch occupies residues 241 to 258 (INKARRDSTDKNREFFHR). The tract at residues 259–408 (ELHMSMKEIR…MEQAENLRTS (150 aa)) is coil 2. Residues 409-572 (YQSDFVIDTP…DEVGWYAHVS (164 aa)) are tail. In terms of domain architecture, LTD spans 459-575 (NTQQFRSYGK…GWYAHVSYSH (117 aa)).

This sequence belongs to the intermediate filament family.

The protein localises to the cytoplasm. Its function is as follows. Cytoplasmic intermediate filaments provide mechanical strength to cells. Not essential protein. The chain is Intermediate filament protein ifd-1 from Caenorhabditis elegans.